The chain runs to 148 residues: Protein-arginine-phosphatase (148 aa).

Residue C9 is the Nucleophile of the active site. 10 to 15 (TGNTCR) is a binding site for substrate. R15 is a catalytic residue. D117 (proton donor) is an active-site residue.

Belongs to the low molecular weight phosphotyrosine protein phosphatase family. As to quaternary structure, is present in solution as a mixture of monomers, dimers and higher order oligomers (trimers and tetramers).

The enzyme catalyses N(omega)-phospho-L-arginyl-[protein] + H2O = L-arginyl-[protein] + phosphate. With respect to regulation, irreversibly inhibited by the synthetic inhibitor cyc-SeCN-amidine, which inactivates the enzyme by inducing disulfide bond formation between the two active site cysteine residues Cys-9 and Cys-14. Catalyzes the specific dephosphorylation of phosphoarginine residues in proteins. Probably counteracts the protein arginine kinase McsB in vivo. Exhibits almost no activity against pTyr peptides. Protein arginine phosphorylation has a physiologically important role and is involved in the regulation of many critical cellular processes, such as protein homeostasis, motility, competence, and stringent and stress responses, by regulating gene expression and protein activity. The chain is Protein-arginine-phosphatase (ywle) from Geobacillus stearothermophilus (Bacillus stearothermophilus).